A 429-amino-acid polypeptide reads, in one-letter code: Adenylosuccinate synthetase (429 aa).

GTP contacts are provided by residues 12-18 (GDEGKGK) and 40-42 (GHT). The active-site Proton acceptor is Asp13. Mg(2+) contacts are provided by Asp13 and Gly40. IMP contacts are provided by residues 13 to 16 (DEGK), 38 to 41 (NAGH), Thr129, Arg143, Gln223, Thr238, and Arg302. His41 functions as the Proton donor in the catalytic mechanism. Residue 298 to 304 (VVTGRKR) coordinates substrate. Residues Arg304, 330-332 (KLD), and 412-414 (STS) contribute to the GTP site.

This sequence belongs to the adenylosuccinate synthetase family. Homodimer. Mg(2+) is required as a cofactor.

The protein resides in the cytoplasm. The catalysed reaction is IMP + L-aspartate + GTP = N(6)-(1,2-dicarboxyethyl)-AMP + GDP + phosphate + 2 H(+). It participates in purine metabolism; AMP biosynthesis via de novo pathway; AMP from IMP: step 1/2. Its function is as follows. Plays an important role in the de novo pathway of purine nucleotide biosynthesis. Catalyzes the first committed step in the biosynthesis of AMP from IMP. This is Adenylosuccinate synthetase from Bartonella bacilliformis (strain ATCC 35685 / KC583 / Herrer 020/F12,63).